The chain runs to 83 residues: U25-theraphotoxin-Cg1a (83 aa).

The first 23 residues, 1 to 23 (MRFHTLLFLSFLLLVSCALICTA), serve as a signal peptide directing secretion. A propeptide spanning residues 24–48 (QHPGLKKSGMFHENVGKGQHIEKKR) is cleaved from the precursor. Intrachain disulfides connect C50/C66, C57/C71, and C65/C81.

This sequence belongs to the neurotoxin 07 (Beta/delta-agtx) family. 03 (aga-4) subfamily. JZTX sub-subfamily. As to expression, expressed by the venom gland.

The protein resides in the secreted. Functionally, inhibits TTX-sensitive sodium currents in rat dorsal root ganglion (DRG) neurons. In Chilobrachys guangxiensis (Chinese earth tiger tarantula), this protein is U25-theraphotoxin-Cg1a.